The following is a 352-amino-acid chain: Isoflavone-7-O-methyltransferase 9 (352 aa).

Residue 118–127 (VLDPTLSGSY) participates in substrate binding. Residues glycine 196, aspartate 219, aspartate 239, methionine 240, and lysine 253 each contribute to the S-adenosyl-L-methionine site. Histidine 257 acts as the Proton acceptor in catalysis.

It belongs to the class I-like SAM-binding methyltransferase superfamily. Cation-independent O-methyltransferase family. COMT subfamily. Homodimer.

It catalyses the reaction a 7-hydroxyisoflavone + S-adenosyl-L-methionine = a 7-methoxyisoflavone + S-adenosyl-L-homocysteine + H(+). Its pathway is phytoalexin biosynthesis; medicarpin biosynthesis. In terms of biological role, transfers a methyl group to 7-hydroxyls of the isoflavones daidzein, genistein and 6,7,4'-trihydroxyisoflavone. Can also methylate (+)6a-hydroxymaackiain with lower efficiency. The chain is Isoflavone-7-O-methyltransferase 9 from Medicago sativa (Alfalfa).